The sequence spans 221 residues: Carbonic anhydrase (221 aa).

The Zn(2+) site is built by Cys57, Asp59, His112, and Cys115.

Belongs to the beta-class carbonic anhydrase family. The cofactor is Zn(2+).

The protein resides in the cytoplasm. It is found in the nucleus. Its subcellular location is the mitochondrion intermembrane space. The catalysed reaction is hydrogencarbonate + H(+) = CO2 + H2O. Functionally, catalyzes the reversible hydration of CO(2) to H(2)CO(3). The main role may be to provide inorganic carbon for the bicarbonate-dependent carboxylation reactions catalyzed by pyruvate carboxylase, acetyl-CoA carboxylase and carbamoyl-phosphate synthetase. Involved in protection against oxidative damage. Encodes a substrate for the non-classical protein export pathway for proteins that lack a cleavable signal sequence. This is Carbonic anhydrase (NCE103) from Saccharomyces cerevisiae (strain ATCC 204508 / S288c) (Baker's yeast).